The primary structure comprises 134 residues: Submaxillary gland androgen-regulated protein 3A (134 aa).

An N-terminal signal peptide occupies residues 1 to 22; the sequence is MKSLTWILGLWALAACFTPGES. A disordered region spans residues 19–134; the sequence is PGESQRGPRG…TDPALPTPAP (116 aa). 3 stretches are compositionally biased toward pro residues: residues 28–43, 50–85, and 94–119; these read GPYP…PPCF, VPPP…PPYG, and LPPP…PPFF.

Belongs to the PROL1/PROL3 family.

The protein localises to the secreted. May play a role in protection or detoxification. This Homo sapiens (Human) protein is Submaxillary gland androgen-regulated protein 3A (SMR3A).